We begin with the raw amino-acid sequence, 41 residues long: Plantazolicin (41 aa).

A propeptide spanning residues 1–27 is cleaved from the precursor; it reads MTQIKVPTALIASVHGEGQHLFEPMAA. Arg-28 carries the N2,N2-dimethylarginine modification. The thiazole-4-carboxylic acid (Arg-Cys) cross-link spans 28–29; the sequence is RC. 2 consecutive cross-links (5-methyloxazole-4-carboxylic acid (Cys-Thr)) follow at residues 29-30 and 31-32; these read CT. A cross-link (thiazole-4-carboxylic acid (Thr-Cys)) is located at residues 30 to 31; that stretch reads TC. Positions 32 to 33 form a cross-link, 5-methyloxazole-4-carboxylic acid (Thr-Thr); it reads TT. A cross-link (oxazole-4-carboxylic acid (Ile-Ser)) is located at residues 35-36; that stretch reads IS. Cross-links (oxazole-4-carboxylic acid (Ser-Ser)) lie at residues 36–37, 37–38, and 38–39; these read SS. A cross-link (5-methyloxazoline-4-carboxylic acid (Ser-Thr)) is located at residues 39–40; sequence ST.

Maturation of thiazole and oxazole containing antibiotics involves the enzymatic condensation of a Cys, Ser or Thr with the alpha-carbonyl of the preceding amino acid to form a thioether or ether bond, then dehydration to form a double bond with the alpha-amino nitrogen. Thiazoline or oxazoline ring are dehydrogenated to form thiazole or oxazole rings. In terms of processing, 2 forms exist: plantazolicin A and plantazolicin B. The structural difference between them is a dimethylation at Arg-28 in plantazolicin A.

The protein resides in the secreted. Its subcellular location is the cell wall. Peptide antibiotic inhibiting growth of Gram-positive bacteria in the dimethylated form plantazolicin A. The desmethyl form plantazolicin B has no antibiotic activity. The mode of action appears to be disruption of cell walls and lysis of cells. Inhibits B.subtilis strain HB0042, B.megaterium strain 7A1 and B.anthracis (MIC=2-4 ug/ml). Weakly inhibits Gram-positive bacteria B.brevis strain ATCC 8246, B.subtilis strain 168, B.cereus strain ATCC 14579 and strain CU1065, B.licheniformis strain ATCC 9789, M.luteus, B.sphaericus, P.granivorans and S.pyogenes (MIC=128 ug/ml). Does not inhibit B.pumilus, P.polymyxa, Arthrobacter sp., S.aureus, vancomycin-resistant E.faecalis, L.monocytogenes, methicillin-resistant S.aureus or Gram-negative bacteria E.coli strain K12, K.terrigena, Pseudomonas sp. and E.carotovora. The chain is Plantazolicin from Bacillus velezensis (strain DSM 23117 / BGSC 10A6 / LMG 26770 / FZB42) (Bacillus amyloliquefaciens subsp. plantarum).